The following is a 222-amino-acid chain: NADH dehydrogenase [ubiquinone] iron-sulfur protein 8-A, mitochondrial (222 aa).

4Fe-4S ferredoxin-type domains are found at residues Arg-114–Glu-143 and Thr-153–Asn-182. [4Fe-4S] cluster contacts are provided by Cys-123, Cys-126, Cys-129, Cys-133, Cys-162, Cys-165, Cys-168, and Cys-172.

The protein belongs to the complex I 23 kDa subunit family. As to quaternary structure, complex I is composed of at least 49 different subunits. This is a component of the iron-sulfur (IP) fragment of the enzyme. The cofactor is [4Fe-4S] cluster.

It is found in the mitochondrion. It carries out the reaction a ubiquinone + NADH + 5 H(+)(in) = a ubiquinol + NAD(+) + 4 H(+)(out). Its function is as follows. Core subunit of the mitochondrial membrane respiratory chain NADH dehydrogenase (Complex I) that is believed to belong to the minimal assembly required for catalysis. Complex I functions in the transfer of electrons from NADH to the respiratory chain. The immediate electron acceptor for the enzyme is believed to be ubiquinone. May donate electrons to ubiquinone. This is NADH dehydrogenase [ubiquinone] iron-sulfur protein 8-A, mitochondrial from Arabidopsis thaliana (Mouse-ear cress).